Here is a 143-residue protein sequence, read N- to C-terminus: Large ribosomal subunit protein uL15 (143 aa).

Basic residues-rich tracts occupy residues 1-13 and 23-38; these read MIRK…KMRG and KKHR…GNAG. Residues 1 to 38 are disordered; that stretch reads MIRKSKKITKMRGSRTCGYGEAKKHRGAGHRGGRGNAG.

It belongs to the universal ribosomal protein uL15 family. Part of the 50S ribosomal subunit.

Binds to the 23S rRNA. This is Large ribosomal subunit protein uL15 from Methanococcus maripaludis (strain C6 / ATCC BAA-1332).